The following is a 156-amino-acid chain: Small ribosomal subunit protein uS7 (156 aa).

This sequence belongs to the universal ribosomal protein uS7 family. In terms of assembly, part of the 30S ribosomal subunit. Contacts proteins S9 and S11.

Functionally, one of the primary rRNA binding proteins, it binds directly to 16S rRNA where it nucleates assembly of the head domain of the 30S subunit. Is located at the subunit interface close to the decoding center, probably blocks exit of the E-site tRNA. This is Small ribosomal subunit protein uS7 from Staphylococcus carnosus (strain TM300).